A 495-amino-acid chain; its full sequence is Glycerol kinase (495 aa).

Thr13 is an ADP binding site. Positions 13, 14, and 15 each coordinate ATP. Residue Thr13 participates in sn-glycerol 3-phosphate binding. ADP is bound at residue Arg17. Sn-glycerol 3-phosphate-binding residues include Arg83, Glu84, Tyr135, and Asp244. Glycerol-binding residues include Arg83, Glu84, Tyr135, Asp244, and Gln245. ADP is bound by residues Thr266 and Gly309. 4 residues coordinate ATP: Thr266, Gly309, Gln313, and Gly410. Residues Gly410 and Asn414 each coordinate ADP.

It belongs to the FGGY kinase family.

The catalysed reaction is glycerol + ATP = sn-glycerol 3-phosphate + ADP + H(+). Its pathway is polyol metabolism; glycerol degradation via glycerol kinase pathway; sn-glycerol 3-phosphate from glycerol: step 1/1. Inhibited by fructose 1,6-bisphosphate (FBP). Key enzyme in the regulation of glycerol uptake and metabolism. Catalyzes the phosphorylation of glycerol to yield sn-glycerol 3-phosphate. This is Glycerol kinase from Shewanella amazonensis (strain ATCC BAA-1098 / SB2B).